We begin with the raw amino-acid sequence, 37 residues long: U12-myrmicitoxin-Mri1a (37 aa).

The N-terminal stretch at 1 to 23 (MKTIELITIFAMITTLMVTVVAG) is a signal peptide. A propeptide spanning residues 24-25 (DP) is cleaved from the precursor. The residue at position 35 (Val-35) is a Valine amide.

As to expression, expressed by the venom gland.

The protein resides in the secreted. Its function is as follows. Toxin that induces mild paralysis, and reduces survival and reproduction when injected into aphids (A.pisum). May affect various processes in the aphid, including wound healing and hemolymph coagulation. It does not increase the sensitivity of the aphids to the chemical insecticides imidacloprid, methomyl and Spirotetramat. Has no insecticidal activity when injected into blowfly (L.caesar). Does not display any antibacterial or antifungal activity. In Manica rubida (European giant red ant), this protein is U12-myrmicitoxin-Mri1a.